Consider the following 252-residue polypeptide: Phosphate import ATP-binding protein PstB (252 aa).

The region spanning 6–247 (ITINNLNFYY…PRDKRTEDYI (242 aa)) is the ABC transporter domain. Residue 38-45 (GPSGCGKS) coordinates ATP.

Belongs to the ABC transporter superfamily. Phosphate importer (TC 3.A.1.7) family. In terms of assembly, the complex is composed of two ATP-binding proteins (PstB), two transmembrane proteins (PstC and PstA) and a solute-binding protein (PstS).

The protein resides in the cell membrane. The catalysed reaction is phosphate(out) + ATP + H2O = ADP + 2 phosphate(in) + H(+). In terms of biological role, part of the ABC transporter complex PstSACB involved in phosphate import. Responsible for energy coupling to the transport system. This Moorella thermoacetica (strain ATCC 39073 / JCM 9320) protein is Phosphate import ATP-binding protein PstB.